The primary structure comprises 292 residues: ATP synthase gamma chain (292 aa).

It belongs to the ATPase gamma chain family. F-type ATPases have 2 components, CF(1) - the catalytic core - and CF(0) - the membrane proton channel. CF(1) has five subunits: alpha(3), beta(3), gamma(1), delta(1), epsilon(1). CF(0) has three main subunits: a, b and c.

Its subcellular location is the cell inner membrane. Functionally, produces ATP from ADP in the presence of a proton gradient across the membrane. The gamma chain is believed to be important in regulating ATPase activity and the flow of protons through the CF(0) complex. This chain is ATP synthase gamma chain, found in Brucella abortus (strain S19).